Consider the following 363-residue polypeptide: Transcriptional regulator AacuR (363 aa).

The interval 1 to 24 (MTSLQCPPPDRTRRSLSPTGPKFR) is disordered. Positions 27–54 (CKSCAASKIRCTKEKPQCARCVKRNMVC) form a DNA-binding region, zn(2)-C6 fungal-type. The span at 63 to 72 (RRKPGARLKH) shows a compositional bias: basic residues. Residues 63 to 104 (RRKPGARLKHRESITTNAHHSPTTTTITTSRTTSSSPSASPK) form a disordered region. A compositionally biased stretch (low complexity) spans 76–102 (ITTNAHHSPTTTTITTSRTTSSSPSAS).

It localises to the nucleus. In terms of biological role, transcriptional regulator; part of the gene cluster that mediates the biosynthesis of the tetrahydroxanthone dimer secalonic acid D. In Aspergillus aculeatus (strain ATCC 16872 / CBS 172.66 / WB 5094), this protein is Transcriptional regulator AacuR.